Here is a 374-residue protein sequence, read N- to C-terminus: DNA replication and repair protein RecF (374 aa).

34-41 contributes to the ATP binding site; that stretch reads GNNGAGKT.

This sequence belongs to the RecF family.

The protein resides in the cytoplasm. Its function is as follows. The RecF protein is involved in DNA metabolism; it is required for DNA replication and normal SOS inducibility. RecF binds preferentially to single-stranded, linear DNA. It also seems to bind ATP. The chain is DNA replication and repair protein RecF from Rhizobium etli (strain CIAT 652).